Reading from the N-terminus, the 207-residue chain is Imidazoleglycerol-phosphate dehydratase (207 aa).

It belongs to the imidazoleglycerol-phosphate dehydratase family.

The protein resides in the cytoplasm. The catalysed reaction is D-erythro-1-(imidazol-4-yl)glycerol 3-phosphate = 3-(imidazol-4-yl)-2-oxopropyl phosphate + H2O. Its pathway is amino-acid biosynthesis; L-histidine biosynthesis; L-histidine from 5-phospho-alpha-D-ribose 1-diphosphate: step 6/9. The polypeptide is Imidazoleglycerol-phosphate dehydratase (Mycobacterium avium (strain 104)).